The chain runs to 323 residues: Mycothiol acetyltransferase (323 aa).

Residue Glu-44 participates in 1D-myo-inositol 2-(L-cysteinylamino)-2-deoxy-alpha-D-glucopyranoside binding. N-acetyltransferase domains lie at 77–176 (GQDL…VSLR) and 173–323 (VSLR…VKEG). An acetyl-CoA-binding site is contributed by 98 to 100 (IAV). 1D-myo-inositol 2-(L-cysteinylamino)-2-deoxy-alpha-D-glucopyranoside is bound by residues Glu-200, Lys-240, and Glu-253. Acetyl-CoA contacts are provided by residues 257–259 (VGV) and 264–270 (QGSGLGK). Tyr-291 contributes to the 1D-myo-inositol 2-(L-cysteinylamino)-2-deoxy-alpha-D-glucopyranoside binding site.

It belongs to the acetyltransferase family. MshD subfamily. In terms of assembly, monomer.

The catalysed reaction is 1D-myo-inositol 2-(L-cysteinylamino)-2-deoxy-alpha-D-glucopyranoside + acetyl-CoA = mycothiol + CoA + H(+). Its function is as follows. Catalyzes the transfer of acetyl from acetyl-CoA to desacetylmycothiol (Cys-GlcN-Ins) to form mycothiol. The protein is Mycothiol acetyltransferase of Pseudarthrobacter chlorophenolicus (strain ATCC 700700 / DSM 12829 / CIP 107037 / JCM 12360 / KCTC 9906 / NCIMB 13794 / A6) (Arthrobacter chlorophenolicus).